The chain runs to 326 residues: DNA-directed RNA polymerase subunit alpha (326 aa).

The segment at 1 to 231 (MQTNLLKPKI…DQLVVFAALE (231 aa)) is alpha N-terminal domain (alpha-NTD). The interval 247–326 (VDPMLMRPVD…ESWPPANLEK (80 aa)) is alpha C-terminal domain (alpha-CTD).

Belongs to the RNA polymerase alpha chain family. Homodimer. The RNAP catalytic core consists of 2 alpha, 1 beta, 1 beta' and 1 omega subunit. When a sigma factor is associated with the core the holoenzyme is formed, which can initiate transcription.

It catalyses the reaction RNA(n) + a ribonucleoside 5'-triphosphate = RNA(n+1) + diphosphate. Functionally, DNA-dependent RNA polymerase catalyzes the transcription of DNA into RNA using the four ribonucleoside triphosphates as substrates. The polypeptide is DNA-directed RNA polymerase subunit alpha (Polynucleobacter asymbioticus (strain DSM 18221 / CIP 109841 / QLW-P1DMWA-1) (Polynucleobacter necessarius subsp. asymbioticus)).